We begin with the raw amino-acid sequence, 212 residues long: Probable nicotinate-nucleotide adenylyltransferase (212 aa).

This sequence belongs to the NadD family.

The catalysed reaction is nicotinate beta-D-ribonucleotide + ATP + H(+) = deamido-NAD(+) + diphosphate. Its pathway is cofactor biosynthesis; NAD(+) biosynthesis; deamido-NAD(+) from nicotinate D-ribonucleotide: step 1/1. Its function is as follows. Catalyzes the reversible adenylation of nicotinate mononucleotide (NaMN) to nicotinic acid adenine dinucleotide (NaAD). This is Probable nicotinate-nucleotide adenylyltransferase from Methylibium petroleiphilum (strain ATCC BAA-1232 / LMG 22953 / PM1).